A 194-amino-acid polypeptide reads, in one-letter code: MTATRGFTLLEILLVLVLVSASAVAVIATFPVSVKDEAKISAQSFYQRLLLLNEEAILSGQDFGVRIDVDTRRLTFLQLTADKGWQKWQNDKMTNQTTLKEGLQLDFELGGGAWQKDDRLFNPGSLFDEEMFADEKKEQKQEPAPQLFVLSSGEVTPFTLSIFPKGQEPDEQWRVTAQENGTLRLLAPGESDEE.

The propeptide at Met1–Gly6 is leader sequence. N-methylphenylalanine is present on Phe7. The helical transmembrane segment at Ile12–Val32 threads the bilayer.

It belongs to the GSP H family. In terms of assembly, type II secretion is composed of four main components: the outer membrane complex, the inner membrane complex, the cytoplasmic secretion ATPase and the periplasm-spanning pseudopilus. Interacts with core component EpsG. Cleaved by prepilin peptidase. Post-translationally, methylated by prepilin peptidase at the amino group of the N-terminal phenylalanine once the leader sequence is cleaved by prepilin peptidase.

The protein localises to the cell inner membrane. Functionally, component of the type II secretion system required for the energy-dependent secretion of extracellular factors such as proteases and toxins from the periplasm. Part of the pseudopilus tip complex that is critical for the recognition and binding of secretion substrates. The sequence is that of Type II secretion system protein H (epsH) from Vibrio cholerae serotype O1 (strain ATCC 39315 / El Tor Inaba N16961).